The chain runs to 554 residues: Eukaryotic translation initiation factor 3 subunit D-2 (554 aa).

The segment at 116 to 149 is disordered; it reads RGNAAIGGGQGGAGGTGGAGVGNKYGKGRDMRRG. Over residues 120-140 the composition is skewed to gly residues; it reads AIGGGQGGAGGTGGAGVGNKY. The segment at 291–305 is RNA gate; that stretch reads QFDLLTVNETALEPP. The segment at 532-554 is disordered; it reads FDSDGNDDEETSDDRPFLKSLGN.

It belongs to the eIF-3 subunit D family. In terms of assembly, component of the eukaryotic translation initiation factor 3 (eIF-3) complex. The eIF-3 complex interacts with pix.

Its subcellular location is the cytoplasm. In terms of biological role, mRNA cap-binding component of the eukaryotic translation initiation factor 3 (eIF-3) complex, which is involved in protein synthesis of a specialized repertoire of mRNAs and, together with other initiation factors, stimulates binding of mRNA and methionyl-tRNAi to the 40S ribosome. The eIF-3 complex specifically targets and initiates translation of a subset of mRNAs involved in cell proliferation. In the eIF-3 complex, eif3d specifically recognizes and binds the 7-methylguanosine cap of a subset of mRNAs. The chain is Eukaryotic translation initiation factor 3 subunit D-2 from Drosophila virilis (Fruit fly).